The following is a 220-amino-acid chain: Ribosomal RNA small subunit methyltransferase G 1 (220 aa).

S-adenosyl-L-methionine contacts are provided by Gly79, Phe84, and Arg150.

The protein belongs to the methyltransferase superfamily. RNA methyltransferase RsmG family.

The protein localises to the cytoplasm. It catalyses the reaction guanosine(527) in 16S rRNA + S-adenosyl-L-methionine = N(7)-methylguanosine(527) in 16S rRNA + S-adenosyl-L-homocysteine. Functionally, specifically methylates the N7 position of guanine in position 527 of 16S rRNA. This is Ribosomal RNA small subunit methyltransferase G 1 from Syntrophobacter fumaroxidans (strain DSM 10017 / MPOB).